A 490-amino-acid chain; its full sequence is Cytochrome P450 2C9 (490 aa).

Residue C435 participates in heme binding.

The protein belongs to the cytochrome P450 family. Heme serves as cofactor.

It localises to the endoplasmic reticulum membrane. The protein localises to the microsome membrane. It carries out the reaction an organic molecule + reduced [NADPH--hemoprotein reductase] + O2 = an alcohol + oxidized [NADPH--hemoprotein reductase] + H2O + H(+). The enzyme catalyses (5Z,8Z,11Z,14Z)-eicosatetraenoate + reduced [NADPH--hemoprotein reductase] + O2 = (8R,9S)-epoxy-(5Z,11Z,14Z)-eicosatrienoate + oxidized [NADPH--hemoprotein reductase] + H2O + H(+). The catalysed reaction is (5Z,8Z,11Z,14Z)-eicosatetraenoate + reduced [NADPH--hemoprotein reductase] + O2 = (8S,9R)-epoxy-(5Z,11Z,14Z)-eicosatrienoate + oxidized [NADPH--hemoprotein reductase] + H2O + H(+). It catalyses the reaction (5Z,8Z,11Z,14Z)-eicosatetraenoate + reduced [NADPH--hemoprotein reductase] + O2 = (11R,12S)-epoxy-(5Z,8Z,14Z)-eicosatrienoate + oxidized [NADPH--hemoprotein reductase] + H2O + H(+). It carries out the reaction (5Z,8Z,11Z,14Z)-eicosatetraenoate + reduced [NADPH--hemoprotein reductase] + O2 = (11S,12R)-epoxy-(5Z,8Z,14Z)-eicosatrienoate + oxidized [NADPH--hemoprotein reductase] + H2O + H(+). The enzyme catalyses (5Z,8Z,11Z,14Z)-eicosatetraenoate + reduced [NADPH--hemoprotein reductase] + O2 = (14R,15S)-epoxy-(5Z,8Z,11Z)-eicosatrienoate + oxidized [NADPH--hemoprotein reductase] + H2O + H(+). The catalysed reaction is (5Z,8Z,11Z,14Z)-eicosatetraenoate + reduced [NADPH--hemoprotein reductase] + O2 = (14S,15R)-epoxy-(5Z,8Z,11Z)-eicosatrienoate + oxidized [NADPH--hemoprotein reductase] + H2O + H(+). It catalyses the reaction (5Z,8Z,11Z,14Z,17Z)-eicosapentaenoate + reduced [NADPH--hemoprotein reductase] + O2 = 8,9-epoxy-(5Z,11Z,14Z,17Z)-eicosatetraenoate + oxidized [NADPH--hemoprotein reductase] + H2O + H(+). It carries out the reaction (5Z,8Z,11Z,14Z,17Z)-eicosapentaenoate + reduced [NADPH--hemoprotein reductase] + O2 = 11,12-epoxy-(5Z,8Z,14Z,17Z)-eicosatetraenoate + oxidized [NADPH--hemoprotein reductase] + H2O + H(+). The enzyme catalyses (5Z,8Z,11Z,14Z,17Z)-eicosapentaenoate + reduced [NADPH--hemoprotein reductase] + O2 = 14,15-epoxy-(5Z,8Z,11Z,17Z)-eicosatetraenoate + oxidized [NADPH--hemoprotein reductase] + H2O + H(+). The catalysed reaction is (5Z,8Z,11Z,14Z,17Z)-eicosapentaenoate + reduced [NADPH--hemoprotein reductase] + O2 = (17R,18S)-epoxy-(5Z,8Z,11Z,14Z)-eicosatetraenoate + oxidized [NADPH--hemoprotein reductase] + H2O + H(+). It catalyses the reaction cholesterol + reduced [NADPH--hemoprotein reductase] + O2 = 25-hydroxycholesterol + oxidized [NADPH--hemoprotein reductase] + H2O + H(+). It carries out the reaction 17beta-estradiol + reduced [NADPH--hemoprotein reductase] + O2 = 2-hydroxy-17beta-estradiol + oxidized [NADPH--hemoprotein reductase] + H2O + H(+). The enzyme catalyses estrone + reduced [NADPH--hemoprotein reductase] + O2 = 2-hydroxyestrone + oxidized [NADPH--hemoprotein reductase] + H2O + H(+). The catalysed reaction is (5Z,8Z,11Z,14Z)-eicosatetraenoate + reduced [NADPH--hemoprotein reductase] + O2 = (11R)-hydroxy-(5Z,8Z,12E,14Z)-eicosatetraenoate + oxidized [NADPH--hemoprotein reductase] + H2O + H(+). It catalyses the reaction (5Z,8Z,11Z,14Z)-eicosatetraenoate + reduced [NADPH--hemoprotein reductase] + O2 = (12R)-hydroxy-(5Z,8Z,10E,14Z)-eicosatetraenoate + oxidized [NADPH--hemoprotein reductase] + H2O + H(+). It carries out the reaction (5Z,8Z,11Z,14Z)-eicosatetraenoate + reduced [NADPH--hemoprotein reductase] + O2 = (15R)-hydroxy-(5Z,8Z,11Z,13E)-eicosatetraenoate + oxidized [NADPH--hemoprotein reductase] + H2O + H(+). The enzyme catalyses (5Z,8Z,11Z,14Z)-eicosatetraenoate + reduced [NADPH--hemoprotein reductase] + O2 = 10-hydroxy-(5Z,8Z,11Z,14Z)-eicosatetraenoate + oxidized [NADPH--hemoprotein reductase] + H2O + H(+). The catalysed reaction is (9Z,12Z)-octadecadienoate + reduced [NADPH--hemoprotein reductase] + O2 = (13R)-hydroxy-(9Z,11E)-octadecadienoate + oxidized [NADPH--hemoprotein reductase] + H2O + H(+). It catalyses the reaction (9Z,12Z)-octadecadienoate + reduced [NADPH--hemoprotein reductase] + O2 = (9R)-hydroxy-(10E,12Z)-octadecadienoate + oxidized [NADPH--hemoprotein reductase] + H2O + H(+). It carries out the reaction (5Z,8Z,11Z,14Z)-eicosatetraenoate + reduced [NADPH--hemoprotein reductase] + O2 = 19-hydroxy-(5Z,8Z,11Z,14Z)-eicosatetraenoate + oxidized [NADPH--hemoprotein reductase] + H2O + H(+). The enzyme catalyses (5Z,8Z,11Z,14Z)-eicosatetraenoate + reduced [NADPH--hemoprotein reductase] + O2 = 13(S)-hydroxy-(5Z,8Z,11Z,14Z)-eicosatetraenoate + oxidized [NADPH--hemoprotein reductase] + H2O + H(+). The catalysed reaction is (5Z,8Z,11Z,14Z)-eicosatetraenoate + reduced [NADPH--hemoprotein reductase] + O2 = 14,15-epoxy-(5Z,8Z,11Z)-eicosatrienoate + oxidized [NADPH--hemoprotein reductase] + H2O + H(+). It catalyses the reaction (5Z,8Z,11Z,14Z)-eicosatetraenoate + reduced [NADPH--hemoprotein reductase] + O2 = 11,12-epoxy-(5Z,8Z,14Z)-eicosatrienoate + oxidized [NADPH--hemoprotein reductase] + H2O + H(+). It carries out the reaction (5Z,8Z,11Z,14Z)-eicosatetraenoate + reduced [NADPH--hemoprotein reductase] + O2 = 13-hydroxy-(5Z,8Z,11Z,14Z)-eicosatetraenoate + oxidized [NADPH--hemoprotein reductase] + H2O + H(+). The enzyme catalyses (4R)-limonene + reduced [NADPH--hemoprotein reductase] + O2 = (1R,5S)-carveol + oxidized [NADPH--hemoprotein reductase] + H2O + H(+). The catalysed reaction is (4S)-limonene + reduced [NADPH--hemoprotein reductase] + O2 = (1S,5R)-carveol + oxidized [NADPH--hemoprotein reductase] + H2O + H(+). It catalyses the reaction (4S)-limonene + reduced [NADPH--hemoprotein reductase] + O2 = (4S)-perillyl alcohol + oxidized [NADPH--hemoprotein reductase] + H2O + H(+). It functions in the pathway lipid metabolism; arachidonate metabolism. The protein operates within steroid metabolism; cholesterol metabolism. Its pathway is terpene metabolism; (4R)-limonene degradation. Its function is as follows. A cytochrome P450 monooxygenase involved in the metabolism of various endogenous substrates, including fatty acids and steroids. Mechanistically, uses molecular oxygen inserting one oxygen atom into a substrate, and reducing the second into a water molecule, with two electrons provided by NADPH via cytochrome P450 reductase (NADPH--hemoprotein reductase). Catalyzes the epoxidation of double bonds of polyunsaturated fatty acids (PUFA). Catalyzes the hydroxylation of carbon-hydrogen bonds. Metabolizes cholesterol toward 25-hydroxycholesterol, a physiological regulator of cellular cholesterol homeostasis. Exhibits low catalytic activity for the formation of catechol estrogens from 17beta-estradiol (E2) and estrone (E1), namely 2-hydroxy E1 and E2. Catalyzes bisallylic hydroxylation and hydroxylation with double-bond migration of polyunsaturated fatty acids (PUFA). Also metabolizes plant monoterpenes such as limonene. Oxygenates (R)- and (S)-limonene to produce carveol and perillyl alcohol. Contributes to the wide pharmacokinetics variability of the metabolism of drugs such as S-warfarin, diclofenac, phenytoin, tolbutamide and losartan. The protein is Cytochrome P450 2C9 of Homo sapiens (Human).